Reading from the N-terminus, the 119-residue chain is Large ribosomal subunit protein bL20 (119 aa).

It belongs to the bacterial ribosomal protein bL20 family.

In terms of biological role, binds directly to 23S ribosomal RNA and is necessary for the in vitro assembly process of the 50S ribosomal subunit. It is not involved in the protein synthesizing functions of that subunit. The protein is Large ribosomal subunit protein bL20 of Bradyrhizobium sp. (strain ORS 278).